A 114-amino-acid chain; its full sequence is UPF0060 membrane protein GDI3492/Gdia_2889 (114 aa).

A run of 4 helical transmembrane segments spans residues 8 to 28 (FAVYAAAALCEIGGCYAWWCW), 35 to 55 (AWVLLPGMASLALFGWLLTLV), 64 to 84 (FAAYGGIYIVGAIVWLRLVEG), and 92 to 112 (AAGVAICLAGAAIILSAGRGA).

The protein belongs to the UPF0060 family.

The protein resides in the cell inner membrane. The sequence is that of UPF0060 membrane protein GDI3492/Gdia_2889 from Gluconacetobacter diazotrophicus (strain ATCC 49037 / DSM 5601 / CCUG 37298 / CIP 103539 / LMG 7603 / PAl5).